A 371-amino-acid polypeptide reads, in one-letter code: tRNA-specific 2-thiouridylase MnmA (371 aa).

ATP is bound by residues 13–20 (GMSGGVDS) and Met39. Residues 99–101 (NPD) are interaction with target base in tRNA. Catalysis depends on Cys104, which acts as the Nucleophile. An intrachain disulfide couples Cys104 to Cys200. Residue Gly128 coordinates ATP. Residues 150–152 (KDQ) form an interaction with tRNA region. Cys200 functions as the Cysteine persulfide intermediate in the catalytic mechanism. The segment at 308 to 309 (RY) is interaction with tRNA.

It belongs to the MnmA/TRMU family.

The protein localises to the cytoplasm. It catalyses the reaction S-sulfanyl-L-cysteinyl-[protein] + uridine(34) in tRNA + AH2 + ATP = 2-thiouridine(34) in tRNA + L-cysteinyl-[protein] + A + AMP + diphosphate + H(+). Catalyzes the 2-thiolation of uridine at the wobble position (U34) of tRNA, leading to the formation of s(2)U34. The protein is tRNA-specific 2-thiouridylase MnmA of Bacillus cereus (strain ATCC 14579 / DSM 31 / CCUG 7414 / JCM 2152 / NBRC 15305 / NCIMB 9373 / NCTC 2599 / NRRL B-3711).